Here is an 876-residue protein sequence, read N- to C-terminus: Beta-glucosidase 1 (876 aa).

The signal sequence occupies residues 1–17 (MLMIVQLLVFALGLAVA). Asn-22, Asn-75, Asn-224, and Asn-267 each carry an N-linked (GlcNAc...) asparagine glycan. The active site involves Asp-295. 10 N-linked (GlcNAc...) asparagine glycosylation sites follow: Asn-332, Asn-339, Asn-372, Asn-389, Asn-426, Asn-544, Asn-585, Asn-739, Asn-780, and Asn-790.

This sequence belongs to the glycosyl hydrolase 3 family.

The catalysed reaction is Hydrolysis of terminal, non-reducing beta-D-glucosyl residues with release of beta-D-glucose.. Its pathway is glycan metabolism; cellulose degradation. This chain is Beta-glucosidase 1 (BGL1), found in Saccharomycopsis fibuligera (Yeast).